The following is a 366-amino-acid chain: ATP-dependent 6-phosphofructokinase (366 aa).

ATP contacts are provided by residues G16, 78–79, and 118–121; these read RE and GNGT. Positions 74–94 are disordered; the sequence is LGTSREKPFKPDPGEKDSEAG. The segment covering 77 to 94 has biased composition (basic and acidic residues); the sequence is SREKPFKPDPGEKDSEAG. N119 serves as a coordination point for Mg(2+). Substrate is bound by residues 141 to 143, R178, 185 to 187, E238, R282, and 288 to 291; these read TID, MGH, and YLQR. The active-site Proton acceptor is D143.

It belongs to the phosphofructokinase type A (PFKA) family. Mixed-substrate PFK group III subfamily. In terms of assembly, homodimer or homotetramer. Mg(2+) serves as cofactor.

It is found in the cytoplasm. The enzyme catalyses beta-D-fructose 6-phosphate + ATP = beta-D-fructose 1,6-bisphosphate + ADP + H(+). It functions in the pathway carbohydrate degradation; glycolysis; D-glyceraldehyde 3-phosphate and glycerone phosphate from D-glucose: step 3/4. Functionally, catalyzes the phosphorylation of D-fructose 6-phosphate to fructose 1,6-bisphosphate by ATP, the first committing step of glycolysis. The sequence is that of ATP-dependent 6-phosphofructokinase from Spirochaeta thermophila (strain ATCC 49972 / DSM 6192 / RI 19.B1).